Consider the following 164-residue polypeptide: Interferon gamma (164 aa).

Residues 1–19 (MTCQTYNLFVLSVIMIYYG) form the signal peptide. Residues N42 and N61 are each glycosylated (N-linked (GlcNAc...) asparagine).

This sequence belongs to the type II (or gamma) interferon family. As to quaternary structure, homodimer.

The protein localises to the secreted. Functionally, produced by lymphocytes activated by specific antigens or mitogens. IFN-gamma, in addition to having antiviral activity, has important immunoregulatory functions. It is a potent activator of macrophages, it has antiproliferative effects on transformed cells and it can potentiate the antiviral and antitumor effects of the type I interferons. This Meleagris gallopavo (Wild turkey) protein is Interferon gamma (IFNG).